A 185-amino-acid polypeptide reads, in one-letter code: Large ribosomal subunit protein uL22 (185 aa).

It belongs to the universal ribosomal protein uL22 family. In terms of assembly, part of the 50S ribosomal subunit.

In terms of biological role, this protein binds specifically to 23S rRNA. It makes multiple contacts with different domains of the 23S rRNA in the assembled 50S subunit and ribosome. Functionally, the globular domain of the protein is located near the polypeptide exit tunnel on the outside of the subunit, while an extended beta-hairpin is found that lines the wall of the exit tunnel in the center of the 70S ribosome. The polypeptide is Large ribosomal subunit protein uL22 (Pyrobaculum islandicum (strain DSM 4184 / JCM 9189 / GEO3)).